A 644-amino-acid polypeptide reads, in one-letter code: DNA mismatch repair protein MutL (644 aa).

Basic and acidic residues predominate over residues 340–360 (KKEKDESVQEQFKFEHTKPRE). The tract at residues 340-425 (KKEKDESVQE…ETVREEKEWT (86 aa)) is disordered. Over residues 387-400 (QLWQPPKQEWQPPQ) the composition is skewed to low complexity. Basic and acidic residues predominate over residues 416 to 425 (ETVREEKEWT).

Belongs to the DNA mismatch repair MutL/HexB family.

Its function is as follows. This protein is involved in the repair of mismatches in DNA. It is required for dam-dependent methyl-directed DNA mismatch repair. May act as a 'molecular matchmaker', a protein that promotes the formation of a stable complex between two or more DNA-binding proteins in an ATP-dependent manner without itself being part of a final effector complex. The polypeptide is DNA mismatch repair protein MutL (Bacillus mycoides (strain KBAB4) (Bacillus weihenstephanensis)).